We begin with the raw amino-acid sequence, 164 residues long: Ribosome maturation factor RimP (164 aa).

The protein belongs to the RimP family.

It is found in the cytoplasm. Required for maturation of 30S ribosomal subunits. This is Ribosome maturation factor RimP from Cellvibrio japonicus (strain Ueda107) (Pseudomonas fluorescens subsp. cellulosa).